The chain runs to 376 residues: Heptahelical transmembrane protein ADIPOR1 (376 aa).

Topologically, residues Met1–Thr90 are cytoplasmic. A disordered region spans residues Pro20–Lys46. Residues Ile91–Leu111 form a helical membrane-spanning segment. The Extracellular segment spans residues Gly112–Pro179. The chain crosses the membrane as a helical span at residues Phe180–Leu200. Over Ser201–Tyr216 the chain is Cytoplasmic. Residues Thr217 to Cys237 traverse the membrane as a helical segment. Residues Glu238–Arg240 lie on the Extracellular side of the membrane. Residues Trp241 to Met261 traverse the membrane as a helical segment. The Cytoplasmic segment spans residues Ser262 to Arg274. A helical membrane pass occupies residues Ala275 to Val295. Residues Asn296–Asn303 are Extracellular-facing. A helical transmembrane segment spans residues Val304 to Leu324. Topologically, residues Thr325–Gln344 are cytoplasmic. A helical membrane pass occupies residues Ile345–Ile365. The Extracellular portion of the chain corresponds to Gln366–Pro376.

Belongs to the ADIPOR family.

The protein resides in the membrane. Functionally, may play a role in abiotic stress response. The polypeptide is Heptahelical transmembrane protein ADIPOR1 (ADIPOR1) (Oryza sativa subsp. japonica (Rice)).